The primary structure comprises 1018 residues: Calcium-transporting ATPase sarcoplasmic/endoplasmic reticulum type (1018 aa).

Topologically, residues 1 to 48 (MEDGHSKTVDEVLSHFRVDPERGLSLDQVKEYQKKYGPNELPAEEGKT) are cytoplasmic. Residues 49 to 69 (LWQLVLEQFDDLLVKILLLAA) traverse the membrane as a helical segment. At 70-88 (IISFVLALFEEHEGVEAFV) the chain is on the lumenal side. Residues 89–109 (EPFVILLILIANAVVGVWQER) traverse the membrane as a helical segment. The Cytoplasmic segment spans residues 110–252 (NAESAIEALK…EIKTPLQQKL (143 aa)). Residues 253 to 272 (DEFGEQLSKVISLICVAVWA) form a helical membrane-spanning segment. Residues 273 to 294 (INIGHFNDPAHGGSWIKGAVYY) are Lumenal-facing. A helical transmembrane segment spans residues 295–312 (FKIAVALAVAAIPEGLPA). Positions 303, 304, 306, and 308 each coordinate Ca(2+). The Cytoplasmic portion of the chain corresponds to 313-756 (VITTCLALGT…EEGRAIYNNM (444 aa)). Asp-350 acts as the 4-aspartylphosphate intermediate in catalysis. Mg(2+) is bound by residues Asp-702 and Asp-706. A helical membrane pass occupies residues 757–776 (KQFIRYLISSNIGEVVSIFL). Residues Asn-767 and Glu-770 each contribute to the Ca(2+) site. Residues 777–786 (TAALGLPEAL) lie on the Lumenal side of the membrane. A helical transmembrane segment spans residues 787–807 (IPVQLLWVNLVTDGLPATALG). Ca(2+)-binding residues include Asn-795, Thr-798, and Asp-799. Residues 808–827 (FNPPDLDIMTKPPRKADEGL) are Cytoplasmic-facing. The helical transmembrane segment at 828–850 (ISGWLFFRYMAIGGYVGCATVGG) threads the bilayer. At 851–896 (AAWWFMFSETGPQLSYWQLTHHLSCLGGGEEFKGIDCKIFNDPHPM) the chain is on the lumenal side. The helical transmembrane segment at 897–916 (TMALSVLVTIEMLNAMNSLS) threads the bilayer. Residue Glu-907 participates in Ca(2+) binding. At 917–929 (ENQSLVQMPPWCN) the chain is on the cytoplasmic side. A helical transmembrane segment spans residues 930-948 (IWLIASMCLSFALHFVILY). Over 949 to 963 (VDVLSTVFQVTPLDG) the chain is Lumenal. Residues 964–984 (NEWMTVMKFSLPVVLLDEILK) traverse the membrane as a helical segment. Residues 985–1018 (FVARRISDGESYIKNMHGLVLAWAVFFAYIIWGP) lie on the Cytoplasmic side of the membrane.

The protein belongs to the cation transport ATPase (P-type) (TC 3.A.3) family.

The protein resides in the endoplasmic reticulum membrane. It localises to the sarcoplasmic reticulum membrane. It catalyses the reaction Ca(2+)(in) + ATP + H2O = Ca(2+)(out) + ADP + phosphate + H(+). In terms of biological role, this magnesium-dependent enzyme catalyzes the hydrolysis of ATP coupled with the transport of calcium. The sequence is that of Calcium-transporting ATPase sarcoplasmic/endoplasmic reticulum type from Anopheles gambiae (African malaria mosquito).